The chain runs to 479 residues: Polyadenylate-binding protein-interacting protein 1 (479 aa).

The tract at residues 1–114 (MSDGFDRAPG…PQQNSESAMA (114 aa)) is disordered. Ser-2 carries the post-translational modification N-acetylalanine. Residues 11-33 (AGRGRSRGLGRGGGGPEGGGFPN) show a composition bias toward gly residues. At Arg-21 the chain carries Omega-N-methylarginine. Residues 45-69 (PPQPKAPGFLQPPPLRQPRTTPPPG) show a composition bias toward pro residues. Polar residues predominate over residues 98 to 111 (PSSQDKIPQQNSES). The tract at residues 116–143 (PQVVVAPVLMSKLSVNAPEFYPSGYSSS) is PABPC1-interacting motif-2 (PAM2). Positions 157–375 (TLSEYVQDFL…LLKLVELRSS (219 aa)) are PAIP1 middle domain (PAIP1M). The MIF4G domain occupies 159–376 (SEYVQDFLNH…LKLVELRSSN (218 aa)). The tract at residues 435–455 (DYEENGTDLSGAGDPYLDDID) is disordered. Residues 440–479 (GTDLSGAGDPYLDDIDDEMDPEIEEAYEKFCLESERKRKQ) form a PABPC1-interacting motif-1 (PAM1) region.

Interacts with the RRM1-RRM2 and C-terminus regions of PABPC1 in a 1:1 stoichiometry. Interacts with EIF4A. In terms of assembly, (Microbial infection) Interacts (via PAIP1M) with human SARS coronaviruses SARS-COV and SARS-COV-2 NSP3 protein (via SARS-unique domain); the interaction increases binding affinity with PABPC1.

The protein localises to the cytoplasm. Its function is as follows. Acts as a coactivator in the regulation of translation initiation of poly(A)-containing mRNAs. Its stimulatory activity on translation is mediated via its action on PABPC1. Competes with PAIP2 for binding to PABPC1. Its association with EIF4A and PABPC1 may potentiate contacts between mRNA termini. May also be involved in translationally coupled mRNA turnover. Implicated with other RNA-binding proteins in the cytoplasmic deadenylation/translational and decay interplay of the FOS mRNA mediated by the major coding-region determinant of instability (mCRD) domain. Functionally, (Microbial infection) Upon interaction with SARS coronavirus SARS-CoV NSP3 protein, plays an important role in viral protein synthesis. The polypeptide is Polyadenylate-binding protein-interacting protein 1 (Homo sapiens (Human)).